A 284-amino-acid polypeptide reads, in one-letter code: Tropomyosin (284 aa).

Positions 1–41 are disordered; that stretch reads MDAIKKKMQAMKLEKDNAVDRAETAEQQSRDAALRAEKAEE. Residues 1–284 adopt a coiled-coil conformation; sequence MDAIKKKMQA…DQTFSELTGY (284 aa). Positions 12 to 41 are enriched in basic and acidic residues; that stretch reads KLEKDNAVDRAETAEQQSRDAALRAEKAEE.

Belongs to the tropomyosin family. As to quaternary structure, homodimer.

Its function is as follows. Tropomyosin, in association with the troponin complex, plays a central role in the calcium dependent regulation of muscle contraction. This chain is Tropomyosin, found in Haemaphysalis longicornis (Bush tick).